Here is a 382-residue protein sequence, read N- to C-terminus: Chaperone protein DnaJ 1 (382 aa).

Residues 4-68 enclose the J domain; the sequence is DYYGILGVDR…DKRRIVDMGG (65 aa). The segment at 134-216 adopts a CR-type zinc-finger fold; the sequence is GAKKDLTLDT…CAGDGRVRAR (83 aa). Positions 147, 150, 164, 167, 190, 193, 204, and 207 each coordinate Zn(2+). 4 CXXCXGXG motif repeats span residues 147 to 154, 164 to 171, 190 to 197, and 204 to 211; these read CTKCHGSG, CGTCNGAG, CHTCDGTG, and CTECAGDG.

Belongs to the DnaJ family. In terms of assembly, homodimer. The cofactor is Zn(2+).

It localises to the cytoplasm. Its function is as follows. Participates actively in the response to hyperosmotic and heat shock by preventing the aggregation of stress-denatured proteins and by disaggregating proteins, also in an autonomous, DnaK-independent fashion. Unfolded proteins bind initially to DnaJ; upon interaction with the DnaJ-bound protein, DnaK hydrolyzes its bound ATP, resulting in the formation of a stable complex. GrpE releases ADP from DnaK; ATP binding to DnaK triggers the release of the substrate protein, thus completing the reaction cycle. Several rounds of ATP-dependent interactions between DnaJ, DnaK and GrpE are required for fully efficient folding. Also involved, together with DnaK and GrpE, in the DNA replication of plasmids through activation of initiation proteins. This chain is Chaperone protein DnaJ 1, found in Corynebacterium glutamicum (strain ATCC 13032 / DSM 20300 / JCM 1318 / BCRC 11384 / CCUG 27702 / LMG 3730 / NBRC 12168 / NCIMB 10025 / NRRL B-2784 / 534).